Reading from the N-terminus, the 64-residue chain is Beta-defensin 2 (64 aa).

The first 22 residues, 1–22 (MRLHHLLLVLFFVVLSAGSGFT), serve as a signal peptide directing secretion. 3 cysteine pairs are disulfide-bonded: cysteine 31-cysteine 60, cysteine 38-cysteine 53, and cysteine 43-cysteine 61.

This sequence belongs to the beta-defensin family.

The protein resides in the secreted. Its function is as follows. Has bactericidal activity. This Ovis aries (Sheep) protein is Beta-defensin 2 (DEFB2).